The sequence spans 404 residues: Transcriptional repressor OPI1 (404 aa).

Phosphoserine is present on Ser-10. Positions 25 to 51 (QSCRQKSQPSEDVSQADKMPASESSTT) are disordered. Positions 26 to 37 (SCRQKSQPSEDV) are enriched in polar residues. The interval 109–138 (KRQKLSRAIAKGKDNLKEYKLNMSIESKKR) is basic motif. Residues 139 to 160 (LVTCLHLLKLANKQLSDKISCL) are leucine-zipper. Disordered regions lie at residues 170-201 (HPLH…DEEF), 305-327 (LQQQ…SSVT), and 378-404 (QQQQ…DSKD). Residues 186-201 (GEDETSSDEDDDDEEF) show a composition bias toward acidic residues. The short motif at 200–206 (EFFDASE) is the FFAT element. Residues 378–387 (QQQQYRQQQQ) are compositionally biased toward low complexity. A compositionally biased stretch (polar residues) spans 394 to 404 (KPSQDNVDSKD).

Interacts with SCS2.

The protein localises to the endoplasmic reticulum. It is found in the nucleus. Negative regulator of the transcriptional complex INO2-INO4 in response to phospholipid precursor availability. When precursors become limiting, OPI1 is retained at the endoplasmic reticulum (ER) and INO2-INO4 activates INO1 and other genes required for phospholipid biosynthesis, whereas abundant precursor availability results in targeting of OPI1 to the nucleus to repress transcription of these genes. Binds directly to phosphatidic acid, which is required for ER targeting and may act as sensing mechanism for precursor availability, as phosphatidic acid becomes rapidly depleted upon phospholipid biosynthesis. The polypeptide is Transcriptional repressor OPI1 (OPI1) (Saccharomyces cerevisiae (strain ATCC 204508 / S288c) (Baker's yeast)).